Here is a 643-residue protein sequence, read N- to C-terminus: 1-deoxy-D-xylulose-5-phosphate synthase (643 aa).

Thiamine diphosphate contacts are provided by residues H79 and 120 to 122; that span reads AHA. Residue D151 participates in Mg(2+) binding. Thiamine diphosphate contacts are provided by residues 152–153, N180, Y287, and E369; that span reads GS. N180 is a binding site for Mg(2+).

Belongs to the transketolase family. DXPS subfamily. In terms of assembly, homodimer. Requires Mg(2+) as cofactor. The cofactor is thiamine diphosphate.

The enzyme catalyses D-glyceraldehyde 3-phosphate + pyruvate + H(+) = 1-deoxy-D-xylulose 5-phosphate + CO2. It participates in metabolic intermediate biosynthesis; 1-deoxy-D-xylulose 5-phosphate biosynthesis; 1-deoxy-D-xylulose 5-phosphate from D-glyceraldehyde 3-phosphate and pyruvate: step 1/1. In terms of biological role, catalyzes the acyloin condensation reaction between C atoms 2 and 3 of pyruvate and glyceraldehyde 3-phosphate to yield 1-deoxy-D-xylulose-5-phosphate (DXP). This Maricaulis maris (strain MCS10) (Caulobacter maris) protein is 1-deoxy-D-xylulose-5-phosphate synthase.